The chain runs to 799 residues: Putative aconitate hydratase, mitochondrial (799 aa).

A mitochondrion-targeting transit peptide spans 1–32 (MVRQLVWQRATASRRLAPKCLSPQQLFARRGL). Residues Gln108 and 201-203 (DSH) contribute to the substrate site. Residues Cys399, Cys462, and Cys465 each coordinate [4Fe-4S] cluster. 2 residues coordinate substrate: Arg489 and Arg494. Residues 538 to 564 (KFRPPQGSDLPSAGFADGNPALQPSAG) form a disordered region. A substrate-binding site is contributed by 685–686 (AR).

The protein belongs to the aconitase/IPM isomerase family.

Its subcellular location is the mitochondrion. In terms of biological role, has no detectable activity towards cis-acontiate or cis-homoaconitate. The sequence is that of Putative aconitate hydratase, mitochondrial (acoB) from Aspergillus fumigatus (strain ATCC MYA-4609 / CBS 101355 / FGSC A1100 / Af293) (Neosartorya fumigata).